We begin with the raw amino-acid sequence, 129 residues long: Prefoldin subunit 6 (129 aa).

Coiled coils occupy residues 6–26 and 84–118; these read VRDL…IQKD and IEYI…LQQR.

The protein belongs to the prefoldin subunit beta family. In terms of assembly, heterohexamer of two PFD-alpha type and four PFD-beta type subunits forming prefoldin co-chaperone complex. Interacts with PFD2, PFD3, PFD4 and PFD5. Interacts with LSM8, a specific subunit of the LSM2-8 complex, which is a core component of the spliceosome. Binds to HSP90 to facilitate the formation of a larger complex made at least of HSP90, PFD6 and LSM8.

The protein resides in the cytoplasm. It is found in the nucleus. Its function is as follows. Binds specifically to cytosolic chaperonin (c-CPN) and transfers target proteins to it. Binds to nascent polypeptide chain and promotes folding in an environment in which there are many competing pathways for nonnative proteins. Together with other chaperonins, contribute to the regulation of gene expression by modulating the spliceosome function on pre-mRNA splicing post-transcriptionally by acting as a co-chaperone of Hsp90 to control levels of LSM8. Required for the biogenesis of tubulins and for subsequent microtubules (MTs) organization and dynamicity, but unable to associate with microtubules. Involved in the process leading to microtubules dissociation in response to gibberellic acid (GA) probably due to the DELLA proteins-mediated translocation of the prefoldin co-chaperone complex from the cytoplasm to the nucleus. Contributes to the GA-dependent regulation of PIN2 trafficking at the plasma membrane, thus influencing auxin flux. This Arabidopsis thaliana (Mouse-ear cress) protein is Prefoldin subunit 6.